Consider the following 411-residue polypeptide: Squalene synthase (411 aa).

2 helical membrane-spanning segments follow: residues 281-301 and 388-408; these read SIFR…AMCY and SPVL…QLSG.

Belongs to the phytoene/squalene synthase family. Requires Mg(2+) as cofactor.

The protein resides in the endoplasmic reticulum membrane. It catalyses the reaction 2 (2E,6E)-farnesyl diphosphate + NADPH + H(+) = squalene + 2 diphosphate + NADP(+). The catalysed reaction is 2 (2E,6E)-farnesyl diphosphate + NADH + H(+) = squalene + 2 diphosphate + NAD(+). It participates in terpene metabolism; lanosterol biosynthesis; lanosterol from farnesyl diphosphate: step 1/3. The chain is Squalene synthase from Nicotiana benthamiana.